Consider the following 309-residue polypeptide: Porphobilinogen deaminase (309 aa).

Cys-243 is modified (S-(dipyrrolylmethanemethyl)cysteine).

Belongs to the HMBS family. Monomer. The cofactor is dipyrromethane.

It carries out the reaction 4 porphobilinogen + H2O = hydroxymethylbilane + 4 NH4(+). Its pathway is porphyrin-containing compound metabolism; protoporphyrin-IX biosynthesis; coproporphyrinogen-III from 5-aminolevulinate: step 2/4. Its function is as follows. Tetrapolymerization of the monopyrrole PBG into the hydroxymethylbilane pre-uroporphyrinogen in several discrete steps. The chain is Porphobilinogen deaminase from Deinococcus geothermalis (strain DSM 11300 / CIP 105573 / AG-3a).